A 964-amino-acid polypeptide reads, in one-letter code: Phosphoenolpyruvate carboxylase (964 aa).

A Phosphoserine modification is found at Ser11. Residues His172 and Lys600 contribute to the active site.

Belongs to the PEPCase type 1 family. Homotetramer. The cofactor is Mg(2+).

Its subcellular location is the cytoplasm. It catalyses the reaction oxaloacetate + phosphate = phosphoenolpyruvate + hydrogencarbonate. It participates in photosynthesis; C4 acid pathway. Its activity is regulated as follows. By light-reversible phosphorylation. Functionally, through the carboxylation of phosphoenolpyruvate (PEP) it forms oxaloacetate, a four-carbon dicarboxylic acid source for the tricarboxylic acid cycle. This is Phosphoenolpyruvate carboxylase from Amaranthus hypochondriacus (Prince-of-Wales feather).